The sequence spans 445 residues: MPVGRSLSLDPNLLAQLQSHSPTLWLNPHQGMPLPDFAPTAADLADADARLRRCAGLLAELFAELRPSGGLIASPLQPAEPLKRAARAGHAQAGAWYVKRDDVLPVAGSIKARGGFHEVLALAESIAERHGLAGADTDRRALASGAARARFARHTVMVGSTGNLGLSIGMLASALGFRTVVHMSADAKAWKKARLRTRGVEVVEHAGDYAKAVDAGRRQAAGMPCCHFVDDEGSRMLFLGYATAAAELAAQLAQAGRPVDARHPLFVHLPCGVGGAPGGIVYGLKALYGEHVHAFVAEPTASPCVLVQLAGDAAHPRSVYDIGLDNRTEADGLAVAQASPLAAALLRAQAAGAFTVDDRQLFAHLLDARERLGIDLEPSAAAAFGGPAWIAGSDAGRAYLRGRGIDPDAATHVIWATGGSLVPAQEHRRFQAHARAQRQVGGAGA.

Position 111 is an N6-(pyridoxal phosphate)lysine (lysine 111).

The protein belongs to the serine/threonine dehydratase family. DsdA subfamily. Requires pyridoxal 5'-phosphate as cofactor.

It carries out the reaction D-serine = pyruvate + NH4(+). The polypeptide is Probable D-serine dehydratase (Burkholderia pseudomallei (strain 1106a)).